The sequence spans 510 residues: Maturase K (510 aa).

Belongs to the intron maturase 2 family. MatK subfamily.

It is found in the plastid. Functionally, usually encoded in the trnK tRNA gene intron. Probably assists in splicing its own and other chloroplast group II introns. The sequence is that of Maturase K from Aneura mirabilis (Parasitic liverwort).